The chain runs to 264 residues: uncharacterized protein (264 aa).

ATP is bound at residue 15 to 22 (KGGTGKTT).

This sequence belongs to the ParA family. MinD subfamily.

This is an uncharacterized protein from Methanocaldococcus jannaschii (strain ATCC 43067 / DSM 2661 / JAL-1 / JCM 10045 / NBRC 100440) (Methanococcus jannaschii).